The primary structure comprises 208 residues: Negative modulator of initiation of replication (208 aa).

Residues 115–116 (AV) are interaction with DNA.

It belongs to the SeqA family. As to quaternary structure, homodimer. Polymerizes to form helical filaments.

It is found in the cytoplasm. Negative regulator of replication initiation, which contributes to regulation of DNA replication and ensures that replication initiation occurs exactly once per chromosome per cell cycle. Binds to pairs of hemimethylated GATC sequences in the oriC region, thus preventing assembly of replication proteins and re-initiation at newly replicated origins. Repression is relieved when the region becomes fully methylated. In Shewanella frigidimarina (strain NCIMB 400), this protein is Negative modulator of initiation of replication.